We begin with the raw amino-acid sequence, 169 residues long: MRWFFFLLLSVIGLDRFTKQLAIIFLRDTGESITIIPGLFSLTYAENRGIAFGMEFLPPGVLLILTTIIVSGVIIYALYQGNRQPLFLGSFGLIAGGGIGNLIDRFTTGRVVDFLYFDLYRGELFGQWIALWPIFNIADSAITIGACMLIIFYGRIFPDSTASGGNNVC.

2 helical membrane-spanning segments follow: residues 56 to 76 and 84 to 104; these read FLPP…VIIY and QPLF…NLID. Active-site residues include Asp113 and Asp139. A helical transmembrane segment spans residues 132–152; that stretch reads WPIFNIADSAITIGACMLIIF.

Belongs to the peptidase A8 family.

Its subcellular location is the cell inner membrane. It carries out the reaction Release of signal peptides from bacterial membrane prolipoproteins. Hydrolyzes -Xaa-Yaa-Zaa-|-(S,diacylglyceryl)Cys-, in which Xaa is hydrophobic (preferably Leu), and Yaa (Ala or Ser) and Zaa (Gly or Ala) have small, neutral side chains.. Its pathway is protein modification; lipoprotein biosynthesis (signal peptide cleavage). In terms of biological role, this protein specifically catalyzes the removal of signal peptides from prolipoproteins. The chain is Lipoprotein signal peptidase from Chlorobium phaeovibrioides (strain DSM 265 / 1930) (Prosthecochloris vibrioformis (strain DSM 265)).